A 560-amino-acid chain; its full sequence is Aluminum-activated malate transporter 12 (560 aa).

Helical transmembrane passes span 54–74 (VGLS…FKGI), 78–98 (AIWA…ATLC), 104–124 (GLGT…ANDS), 130–150 (AIFI…IRFI), 156–176 (NYDY…VSSY), and 189–209 (FYTI…VFPI). The segment at 386–421 (LHRHNNKHQNGSISNNKHHQRNSSNSGKDLNGDVSL) is disordered. Over residues 407 to 421 (NSSNSGKDLNGDVSL) the composition is skewed to polar residues.

It belongs to the aromatic acid exporter (TC 2.A.85) family. Expressed in roots, stems, leaves, flowers and pollen. Mainly detected in the roots vascular stele and in the leaves guard cells.

The protein localises to the cell membrane. Functionally, malate-sensitive anion transporter permeable to chloride, nitrate, sulfate and malate. Involved in dark-, CO(2)-, abscisic acid- and water-deficient-induced stomatal closure. Belongs to the R-type anion channels. This Arabidopsis thaliana (Mouse-ear cress) protein is Aluminum-activated malate transporter 12 (ALMT12).